A 709-amino-acid chain; its full sequence is Fatty acid oxidation complex subunit alpha (709 aa).

The enoyl-CoA hydratase stretch occupies residues 1-188 (MEKTFNLTRR…KMGLVNDVVP (188 aa)). Positions 308-709 (RKVKKAVILG…EMAAEKTRFF (402 aa)) are 3-hydroxyacyl-CoA dehydrogenase.

The protein in the N-terminal section; belongs to the enoyl-CoA hydratase/isomerase family. In the central section; belongs to the 3-hydroxyacyl-CoA dehydrogenase family. Heterotetramer of two alpha chains (FadJ) and two beta chains (FadI).

Its subcellular location is the cytoplasm. It catalyses the reaction a (3S)-3-hydroxyacyl-CoA = a (2E)-enoyl-CoA + H2O. It carries out the reaction a 4-saturated-(3S)-3-hydroxyacyl-CoA = a (3E)-enoyl-CoA + H2O. The catalysed reaction is a (3S)-3-hydroxyacyl-CoA + NAD(+) = a 3-oxoacyl-CoA + NADH + H(+). The enzyme catalyses (3S)-3-hydroxybutanoyl-CoA = (3R)-3-hydroxybutanoyl-CoA. The protein operates within lipid metabolism; fatty acid beta-oxidation. In terms of biological role, catalyzes the formation of a hydroxyacyl-CoA by addition of water on enoyl-CoA. Also exhibits 3-hydroxyacyl-CoA epimerase and 3-hydroxyacyl-CoA dehydrogenase activities. This is Fatty acid oxidation complex subunit alpha from Shewanella sp. (strain MR-4).